We begin with the raw amino-acid sequence, 291 residues long: MFEGAMPALITPFTKDDRIDREGLQRNIAFVEEGGVSGIVPCGTTGESATLSAAEHEEVIDIAVECSKVPVIAGTGSNNTGEALQFTKHAADAGVDGVLLISPYYNKPNPAGLLAHFKKIAEAVDIPMILYNVPSRTGQDMPVDVIVELAKVENIVGIKEASGNAAKVSQILENTMDDDFVVLSGEDGLTLPIISMGGRGVISVAANIVPDKMSGMVNAALKGDYETARKLHFEIAPLIRALFLETNPIPVKKAAELVGLASGHLRLPLAPISDANQAKLANELRKLGVME.

Thr-45 contributes to the pyruvate binding site. Tyr-131 acts as the Proton donor/acceptor in catalysis. The Schiff-base intermediate with substrate role is filled by Lys-159. Position 202 (Ile-202) interacts with pyruvate.

The protein belongs to the DapA family. As to quaternary structure, homotetramer; dimer of dimers.

It is found in the cytoplasm. It carries out the reaction L-aspartate 4-semialdehyde + pyruvate = (2S,4S)-4-hydroxy-2,3,4,5-tetrahydrodipicolinate + H2O + H(+). Its pathway is amino-acid biosynthesis; L-lysine biosynthesis via DAP pathway; (S)-tetrahydrodipicolinate from L-aspartate: step 3/4. Catalyzes the condensation of (S)-aspartate-beta-semialdehyde [(S)-ASA] and pyruvate to 4-hydroxy-tetrahydrodipicolinate (HTPA). The chain is 4-hydroxy-tetrahydrodipicolinate synthase from Methanosarcina mazei (strain ATCC BAA-159 / DSM 3647 / Goe1 / Go1 / JCM 11833 / OCM 88) (Methanosarcina frisia).